A 222-amino-acid polypeptide reads, in one-letter code: N-(5'-phosphoribosyl)anthranilate isomerase (222 aa).

The protein belongs to the TrpF family.

The catalysed reaction is N-(5-phospho-beta-D-ribosyl)anthranilate = 1-(2-carboxyphenylamino)-1-deoxy-D-ribulose 5-phosphate. Its pathway is amino-acid biosynthesis; L-tryptophan biosynthesis; L-tryptophan from chorismate: step 3/5. This chain is N-(5'-phosphoribosyl)anthranilate isomerase, found in Prosthecochloris aestuarii (strain DSM 271 / SK 413).